Reading from the N-terminus, the 513-residue chain is ATP synthase subunit alpha (513 aa).

169–176 (GDRQTGKT) lines the ATP pocket.

It belongs to the ATPase alpha/beta chains family. In terms of assembly, F-type ATPases have 2 components, CF(1) - the catalytic core - and CF(0) - the membrane proton channel. CF(1) has five subunits: alpha(3), beta(3), gamma(1), delta(1), epsilon(1). CF(0) has three main subunits: a(1), b(2) and c(9-12). The alpha and beta chains form an alternating ring which encloses part of the gamma chain. CF(1) is attached to CF(0) by a central stalk formed by the gamma and epsilon chains, while a peripheral stalk is formed by the delta and b chains.

The protein resides in the cell inner membrane. The enzyme catalyses ATP + H2O + 4 H(+)(in) = ADP + phosphate + 5 H(+)(out). Functionally, produces ATP from ADP in the presence of a proton gradient across the membrane. The alpha chain is a regulatory subunit. The polypeptide is ATP synthase subunit alpha (Pseudoalteromonas translucida (strain TAC 125)).